Here is a 325-residue protein sequence, read N- to C-terminus: Helicase VP6-A (325 aa).

Disordered stretches follow at residues 1–122 and 185–230; these read MLLA…GATG and DLRR…EPAR. Composition is skewed to basic and acidic residues over residues 8-18, 32-54, 61-79, and 92-105; these read VIKRSSEELKQ, EGGKEDKTEPKEESKAEGSKDGE, GQKEEGGKETKDADVDRRI, and LGERANENADRGDG. An ATP-binding site is contributed by K106. Residues 106–122 show a composition bias toward gly residues; sequence KVGGGGGDADAGVGATG. Composition is skewed to basic and acidic residues over residues 185–203 and 211–229; these read DLRRKEKNGTHAKAVERGG and HGDAQREGVEEEKTSEEPA.

This sequence belongs to the orbivirus VP6 family. Homohexamer.

The protein resides in the virion. The catalysed reaction is ATP + H2O = ADP + phosphate + H(+). In terms of biological role, ATP dependent RNA helicase essential for RNA packaging and viral transcription. Possesses ss- and dsRNA-binding capacity. The sequence is that of Helicase VP6-A (Segment-9) from Bluetongue virus 17 (isolate USA) (BTV 17).